We begin with the raw amino-acid sequence, 780 residues long: MDEQAGPGVFFSNNHPGAGGAKGLGPLAEAAAAGDGAAAAGAARAQYSLPGILHFLQHEWARFEVERAQWEVERAELQAQIAFLQGERKGQENLKKDLVRRIKMLEYALKQERAKYHKLKYGTELNQGDMKPPSYDSDEGNETEVQPQQNSQLMWKQGRQLLRQYLQEVGYTDTILDVKSKRVRALLGFSSDVTDREDDKNQDSVVNGTEAEVKETAMIAKSELTDSASVLDNFKFLESAAADFSDEDEDDDVDGREKSVIDTSTIVRKKALPDSGEDRDTKEALKEFDFLVTSEEGDNESRSAGDGTDWEKEDQCLMPEAWNVDQGVITKLKEQYKKERKGKKGVKRPNRSKLQDMLANLRDVDELPSLQPSVGSPSRPSSSRLPEHEINRADEVEALTFPPSSGKSFIMGADEALESELGLGELAGLTVANEADSLTYDIANNKDALRKTWNPKFTLRSHFDGIRALAFHPIEPVLITASEDHTLKMWNLQKTAPAKKSTSLDVEPIYTFRAHKGPVLCVVMSSNGEQCYSGGTDGLIQGWNTTNPNIDPYDSYDPSVLRGPLLGHTDAVWGLAYSAAHQRLLSCSADGTLRLWNTTEVAPALSVFNDTKELGIPASVDLVSSDPSHMVASFSKGYTSIFNMETQQRILTLESNVDTTANSSCQINRVISHPTLPISITAHEDRHIKFYDNNTGKLIHSMVAHLEAVTSLAVDPNGLYLMSGSHDCSIRLWNLESKTCIQEFTAHRKKFEESIHDVAFHPSKCYIASAGADALAKVFV.

Positions 53–120 (LHFLQHEWAR…QERAKYHKLK (68 aa)) form a coiled coil. A caveolin-binding region spans residues 55 to 63 (FLQHEWARF). A disordered region spans residues 124–150 (ELNQGDMKPPSYDSDEGNETEVQPQQN). Serine 137 is subject to Phosphoserine. Positions 149–166 (QNSQLMWKQGRQLLRQYL) are calmodulin-binding. Threonine 225 carries the post-translational modification Phosphothreonine. Phosphoserine is present on residues serine 227, serine 229, serine 245, and serine 259. Disordered regions lie at residues 289–310 (DFLV…GTDW) and 365–387 (DELP…RLPE). Over residues 299–310 (NESRSAGDGTDW) the composition is skewed to basic and acidic residues. WD repeat units follow at residues 461 to 500 (SHFD…PAKK), 514 to 553 (AHKG…IDPY), 567 to 606 (GHTD…PALS), 662 to 701 (NSSC…LIHS), 704 to 743 (AHLE…CIQE), and 750 to 780 (KFEE…KVFV).

The protein belongs to the WD repeat striatin family. As to quaternary structure, part of the core of STRIPAK complexes composed of PP2A catalytic and scaffolding subunits, the striatins (PP2A regulatory subunits), the striatin-associated proteins MOB4, STRIP1 and STRIP2, PDCD10 and members of the STE20 kinases, such as STK24 and STK26. Interacts with CTTNBP2; this interaction may regulate dendritic spine distribution of STRN. Activation of glutamate receptors weakens the interaction with CTTNBP2. Preferentially expressed in brain.

The protein resides in the cytoplasm. It is found in the membrane. Its subcellular location is the cell projection. It localises to the dendritic spine. Calmodulin-binding scaffolding protein which is the center of the striatin-interacting phosphatase and kinase (STRIPAK) complexes. STRIPAK complexes have critical roles in protein (de)phosphorylation and are regulators of multiple signaling pathways including Hippo, MAPK, nuclear receptor and cytoskeleton remodeling. Different types of STRIPAK complexes are involved in a variety of biological processes such as cell growth, differentiation, apoptosis, metabolism and immune regulation. This Homo sapiens (Human) protein is Striatin (STRN).